Reading from the N-terminus, the 117-residue chain is Iron-sulfur cluster insertion protein ErpA (117 aa).

Iron-sulfur cluster contacts are provided by Cys-45, Cys-109, and Cys-111.

Belongs to the HesB/IscA family. As to quaternary structure, homodimer. It depends on iron-sulfur cluster as a cofactor.

Functionally, required for insertion of 4Fe-4S clusters for at least IspG. In Ruthia magnifica subsp. Calyptogena magnifica, this protein is Iron-sulfur cluster insertion protein ErpA.